A 121-amino-acid polypeptide reads, in one-letter code: Small ribosomal subunit protein uS13 (121 aa).

The disordered stretch occupies residues 97–121 (VRGQRTRTNARTRRGARKTVAGKKK). The segment covering 100–121 (QRTRTNARTRRGARKTVAGKKK) has biased composition (basic residues).

Belongs to the universal ribosomal protein uS13 family. In terms of assembly, part of the 30S ribosomal subunit. Forms a loose heterodimer with protein S19. Forms two bridges to the 50S subunit in the 70S ribosome.

Functionally, located at the top of the head of the 30S subunit, it contacts several helices of the 16S rRNA. In the 70S ribosome it contacts the 23S rRNA (bridge B1a) and protein L5 of the 50S subunit (bridge B1b), connecting the 2 subunits; these bridges are implicated in subunit movement. Contacts the tRNAs in the A and P-sites. The polypeptide is Small ribosomal subunit protein uS13 (Synechococcus sp. (strain CC9311)).